A 430-amino-acid polypeptide reads, in one-letter code: Serine--tRNA ligase (430 aa).

234–236 serves as a coordination point for L-serine; the sequence is TAE. 265–267 contributes to the ATP binding site; it reads RRE. Residue E288 participates in L-serine binding. Residue 352-355 participates in ATP binding; sequence EISS. Position 388 (S388) interacts with L-serine.

It belongs to the class-II aminoacyl-tRNA synthetase family. Type-1 seryl-tRNA synthetase subfamily. Homodimer. The tRNA molecule binds across the dimer.

The protein resides in the cytoplasm. It catalyses the reaction tRNA(Ser) + L-serine + ATP = L-seryl-tRNA(Ser) + AMP + diphosphate + H(+). The enzyme catalyses tRNA(Sec) + L-serine + ATP = L-seryl-tRNA(Sec) + AMP + diphosphate + H(+). It participates in aminoacyl-tRNA biosynthesis; selenocysteinyl-tRNA(Sec) biosynthesis; L-seryl-tRNA(Sec) from L-serine and tRNA(Sec): step 1/1. In terms of biological role, catalyzes the attachment of serine to tRNA(Ser). Is also able to aminoacylate tRNA(Sec) with serine, to form the misacylated tRNA L-seryl-tRNA(Sec), which will be further converted into selenocysteinyl-tRNA(Sec). This is Serine--tRNA ligase from Thermosynechococcus vestitus (strain NIES-2133 / IAM M-273 / BP-1).